A 1172-amino-acid chain; its full sequence is Phytochrome B (1172 aa).

Over residues 1-16 (MVSGVGGSGGGRGGGR) the composition is skewed to gly residues. A disordered region spans residues 1–54 (MVSGVGGSGGGRGGGRGGEEEPSSSHTPNNRRGGEQAQSSGTKSLRPRSNTESM). The span at 24-54 (SSHTPNNRRGGEQAQSSGTKSLRPRSNTESM) shows a compositional bias: polar residues. Residues 252–433 (DIKLLCDTVV…AFGLQLNMEL (182 aa)) enclose the GAF domain. Position 357 (cysteine 357) interacts with phytochromobilin. 2 PAS domains span residues 652–723 (VARE…LRGD) and 786–857 (DYKA…MIVL). In terms of domain architecture, Histidine kinase spans 934-1153 (YICQVIKNPL…LIILELPVPR (220 aa)).

This sequence belongs to the phytochrome family. Homodimer. Interacts with ADO1 and PKS4. Stabilized by interactions with PAPP5 and FYPP3 which are enhanced in the phosphorylated Pfr form. Interacts with VOZ1 and VOZ2. Binds, via its photosensory domain, to PTAC12/HMR/PAP5 when photoactivated; this interaction stimulates its localization to photobodies. Interacts with CRY1 specifically when in the dark/far-red (Pr) state, but not when red light-activated (Pfr). Interacts with PIF4 and PIF5 in response to low blue light (LBL). Component of a red light-dependent nuclear complex made of PHL, PHYB and CO. Interacts directly with PHL. Binds to UNE10/PIF8 when red light-activated (Pfr). When light-activated, interacts with PCH1 and PCHL. Associated with DRT111/RSN2/SFPS, SMP2 and SWAP1 in nuclear photobodies upon response to red light (Pfr form). In terms of processing, contains one covalently linked phytochromobilin chromophore. In terms of tissue distribution, expressed in fruits, flowers, leaves, stems, seedlings and roots.

Its subcellular location is the cytoplasm. The protein localises to the nucleus. It is found in the nucleoplasm. It localises to the nucleus speckle. Functionally, regulatory photoreceptor which exists in two forms that are reversibly interconvertible by light: the Pr form that absorbs maximally in the red region of the spectrum and the Pfr form that absorbs maximally in the far-red region. Photoconversion of Pr to Pfr induces an array of morphogenetic responses, whereas reconversion of Pfr to Pr cancels the induction of those responses. Pfr controls the expression of a number of nuclear genes including those encoding the small subunit of ribulose-bisphosphate carboxylase, chlorophyll A/B binding protein, protochlorophyllide reductase, rRNA, etc. It also controls the expression of its own gene(s) in a negative feedback fashion. Involved in the flowering time regulation. Involved in light-regulated circadian phase control that triggers stomatal aperture, stomatal conductance, and CO(2) assimilation. Implicated in red light perception, and, to a lower extent, in blue light signaling. Controls thermomorphogenesis in the daytime and regulates temperature responses by associating with the promoters of key target genes in a temperature-dependent manner and subsequently repressing their expression in a PIF4-dependent manner (temperature-responsive transcriptional regulator); this process requires PTAC12/HMR/PAP5 (transcriptional activator). Thermal timer that integrates temperature information over the course of the night. Detabilizes UNE10/PIF8 in red light. The sequence is that of Phytochrome B from Arabidopsis thaliana (Mouse-ear cress).